The chain runs to 399 residues: Tyrosine--tRNA ligase (399 aa).

A 'HIGH' region motif is present at residues 42–51 (PTAPDLHLGH). Residues 226–230 (KMSKS) carry the 'KMSKS' region motif. Lysine 229 contributes to the ATP binding site. In terms of domain architecture, S4 RNA-binding spans 336-396 (MPIAAVLNKA…GRKAFARITL (61 aa)).

This sequence belongs to the class-I aminoacyl-tRNA synthetase family. TyrS type 2 subfamily. In terms of assembly, homodimer.

The protein resides in the cytoplasm. It carries out the reaction tRNA(Tyr) + L-tyrosine + ATP = L-tyrosyl-tRNA(Tyr) + AMP + diphosphate + H(+). Functionally, catalyzes the attachment of tyrosine to tRNA(Tyr) in a two-step reaction: tyrosine is first activated by ATP to form Tyr-AMP and then transferred to the acceptor end of tRNA(Tyr). This is Tyrosine--tRNA ligase from Pseudomonas fluorescens (strain ATCC BAA-477 / NRRL B-23932 / Pf-5).